The primary structure comprises 284 residues: RNase adapter protein RapZ (284 aa).

An ATP-binding site is contributed by 8–15; sequence GRSGSGKS. Residue 56–59 participates in GTP binding; that stretch reads DVRN. The interval 266–284 is RNA-binding; it reads RSRGKNVQSRHRTLEKRKP.

Belongs to the RapZ-like family. RapZ subfamily. In terms of assembly, homotrimer.

Its function is as follows. Modulates the synthesis of GlmS, by affecting the processing and stability of the regulatory small RNA GlmZ. When glucosamine-6-phosphate (GlcN6P) concentrations are high in the cell, RapZ binds GlmZ and targets it to cleavage by RNase E. Consequently, GlmZ is inactivated and unable to activate GlmS synthesis. Under low GlcN6P concentrations, RapZ is sequestered and inactivated by an other regulatory small RNA, GlmY, preventing GlmZ degradation and leading to synthesis of GlmS. The sequence is that of RNase adapter protein RapZ from Shigella boydii serotype 18 (strain CDC 3083-94 / BS512).